A 271-amino-acid polypeptide reads, in one-letter code: ATP synthase subunit delta (271 aa).

The protein belongs to the ATPase delta chain family. F-type ATPases have 2 components, F(1) - the catalytic core - and F(0) - the membrane proton channel. F(1) has five subunits: alpha(3), beta(3), gamma(1), delta(1), epsilon(1). F(0) has three main subunits: a(1), b(2) and c(10-14). The alpha and beta chains form an alternating ring which encloses part of the gamma chain. F(1) is attached to F(0) by a central stalk formed by the gamma and epsilon chains, while a peripheral stalk is formed by the delta and b chains.

Its subcellular location is the cell membrane. F(1)F(0) ATP synthase produces ATP from ADP in the presence of a proton or sodium gradient. F-type ATPases consist of two structural domains, F(1) containing the extramembraneous catalytic core and F(0) containing the membrane proton channel, linked together by a central stalk and a peripheral stalk. During catalysis, ATP synthesis in the catalytic domain of F(1) is coupled via a rotary mechanism of the central stalk subunits to proton translocation. Functionally, this protein is part of the stalk that links CF(0) to CF(1). It either transmits conformational changes from CF(0) to CF(1) or is implicated in proton conduction. In Corynebacterium kroppenstedtii (strain DSM 44385 / JCM 11950 / CIP 105744 / CCUG 35717), this protein is ATP synthase subunit delta.